The chain runs to 77 residues: Conotoxin ArMSGL-0143 (77 aa).

An N-terminal signal peptide occupies residues 1-22; sequence MSGLGIMLLTLLLLVFMETSHQ. A propeptide spanning residues 23-44 is cleaved from the precursor; sequence DAGEKQATQRDAINVRRRRSLT. 3 disulfides stabilise this stretch: Cys51–Cys63, Cys55–Cys71, and Cys62–Cys75. Phe76 is modified (phenylalanine amide).

This sequence belongs to the conotoxin O3 superfamily. Expressed by the venom duct.

Its subcellular location is the secreted. The chain is Conotoxin ArMSGL-0143 from Conus arenatus (Sand-dusted cone).